A 483-amino-acid polypeptide reads, in one-letter code: Membrane-bound lytic murein transglycosylase F (483 aa).

A signal peptide spans M1–A18. The tract at residues W19 to L267 is non-LT domain. The LT domain stretch occupies residues H269–E483. The active site involves E312. Residues Q459–E483 are disordered. The segment covering I473–E483 has biased composition (basic and acidic residues).

It in the N-terminal section; belongs to the bacterial solute-binding protein 3 family. In the C-terminal section; belongs to the transglycosylase Slt family.

The protein resides in the cell outer membrane. The catalysed reaction is Exolytic cleavage of the (1-&gt;4)-beta-glycosidic linkage between N-acetylmuramic acid (MurNAc) and N-acetylglucosamine (GlcNAc) residues in peptidoglycan, from either the reducing or the non-reducing ends of the peptidoglycan chains, with concomitant formation of a 1,6-anhydrobond in the MurNAc residue.. Murein-degrading enzyme that degrades murein glycan strands and insoluble, high-molecular weight murein sacculi, with the concomitant formation of a 1,6-anhydromuramoyl product. Lytic transglycosylases (LTs) play an integral role in the metabolism of the peptidoglycan (PG) sacculus. Their lytic action creates space within the PG sacculus to allow for its expansion as well as for the insertion of various structures such as secretion systems and flagella. The protein is Membrane-bound lytic murein transglycosylase F of Actinobacillus pleuropneumoniae serotype 7 (strain AP76).